The following is a 398-amino-acid chain: Phosphoglycerate kinase (398 aa).

Substrate is bound by residues 21-23 (DFN), arginine 36, 59-62 (HLGR), arginine 119, and arginine 157. Residues lysine 208, glycine 296, glutamate 327, and 354–357 (GGDS) each bind ATP.

Belongs to the phosphoglycerate kinase family. As to quaternary structure, monomer.

It localises to the cytoplasm. It carries out the reaction (2R)-3-phosphoglycerate + ATP = (2R)-3-phospho-glyceroyl phosphate + ADP. It participates in carbohydrate degradation; glycolysis; pyruvate from D-glyceraldehyde 3-phosphate: step 2/5. The sequence is that of Phosphoglycerate kinase from Streptococcus pyogenes serotype M18 (strain MGAS8232).